We begin with the raw amino-acid sequence, 209 residues long: MRTIDKRIAPNVRLAATLVARAPALTLAYDARCKSRLAATLDTGEDVALVLPRGTVLRDGDVLVADDGALVRVAAAHEAVLLVRAPDALTLTRAAYHLGNRHTPVEVGAGCLKLEYDPALADMLTRLGATVERASAPFQPEAGAYGGGHRHGHDATFAEDYALAQQVFDEHHGHSHSHSHDHDHDHDHDHDHDHQHGPSCSHGHHHGHR.

Positions 170-196 (EHHGHSHSHSHDHDHDHDHDHDHDHQH) are enriched in basic and acidic residues. The disordered stretch occupies residues 170-209 (EHHGHSHSHSHDHDHDHDHDHDHDHQHGPSCSHGHHHGHR).

The protein belongs to the UreE family.

Its subcellular location is the cytoplasm. Functionally, involved in urease metallocenter assembly. Binds nickel. Probably functions as a nickel donor during metallocenter assembly. The protein is Urease accessory protein UreE of Burkholderia mallei (strain NCTC 10247).